Reading from the N-terminus, the 362-residue chain is MAQIFNFSSGPAMLPAEVLKQAQQELRDWNGLGTSVMEVSHRGKEFIQVAEEAEKDFRDLLNVPSNYKVLFCHGGGRGQFAAVPLNILGDKTTADYVDAGYWAASAIKEAKKYCTPNVFDAKVTVDGLRAVKPMREWQLSDNAAYMHYCPNETIDGIAIDETPDFGKDVVVAADFSSTILSRPIDVSRYGVIYAGAQKNIGPAGLTIVIVREDLLGKANIACPSILDYSILNDNGSMFNTPPTFAWYLSGLVFKWLKANGGVAEMDKINQQKAELLYGVIDNSDFYRNDVAKANRSRMNVPFQLADSALDKLFLEESFAAGLHALKGHRVVGGMRASIYNAMPLEGVKALTDFMIEFERRHG.

Positions 9 and 42 each coordinate L-glutamate. Residues 76-77 (GR), Trp102, Thr153, Asp174, and Gln197 contribute to the pyridoxal 5'-phosphate site. An N6-(pyridoxal phosphate)lysine modification is found at Lys198. Residue 239–240 (NT) participates in pyridoxal 5'-phosphate binding.

The protein belongs to the class-V pyridoxal-phosphate-dependent aminotransferase family. SerC subfamily. As to quaternary structure, homodimer. The cofactor is pyridoxal 5'-phosphate.

It localises to the cytoplasm. The catalysed reaction is O-phospho-L-serine + 2-oxoglutarate = 3-phosphooxypyruvate + L-glutamate. It carries out the reaction 4-(phosphooxy)-L-threonine + 2-oxoglutarate = (R)-3-hydroxy-2-oxo-4-phosphooxybutanoate + L-glutamate. Its pathway is amino-acid biosynthesis; L-serine biosynthesis; L-serine from 3-phospho-D-glycerate: step 2/3. It functions in the pathway cofactor biosynthesis; pyridoxine 5'-phosphate biosynthesis; pyridoxine 5'-phosphate from D-erythrose 4-phosphate: step 3/5. Catalyzes the reversible conversion of 3-phosphohydroxypyruvate to phosphoserine and of 3-hydroxy-2-oxo-4-phosphonooxybutanoate to phosphohydroxythreonine. The polypeptide is Phosphoserine aminotransferase (Escherichia coli O17:K52:H18 (strain UMN026 / ExPEC)).